A 107-amino-acid polypeptide reads, in one-letter code: Small polypeptide DEVIL 9 (107 aa).

The span at 1–12 (MDEKWRLSKKDA) shows a compositional bias: basic and acidic residues. Positions 1-79 (MDEKWRLSKK…EKGSITQKYS (79 aa)) are disordered. A helical membrane pass occupies residues 9–29 (KKDALAASCSSSSTSSKSKFS). Positions 13–65 (LAASCSSSSTSSKSKFSRSFSTSASSSKAPAFVRSSSTKCSVPSSSSSSISRS) are enriched in low complexity. Residues 73–104 (SITQKYSSLAKEQKGRFYIMRRCVAMLVCWHK) are required for DVL/RTFL small polypeptide activity.

Belongs to the DVL/RTFL small polypeptides family.

The protein resides in the cell membrane. Its function is as follows. Small polypeptide acting as a regulatory molecule which coordinates cellular responses required for differentiation, growth and development, probably by restricting polar cell proliferation in lateral organs and coordinating socket cell recruitment and differentiation at trichome sites. This chain is Small polypeptide DEVIL 9, found in Arabidopsis thaliana (Mouse-ear cress).